A 591-amino-acid polypeptide reads, in one-letter code: Polyphenol oxidase D, chloroplastic (591 aa).

A chloroplast-targeting transit peptide spans 1–83; it reads MASLCSNSST…ANAIPLAASA (83 aa). Intrachain disulfides connect Cys94–Cys110 and Cys109–Cys177. Residues His176, His194, His203, His324, His328, and His366 each coordinate Cu cation. Positions 180-194 form a cross-link, 2'-(S-cysteinyl)-histidine (Cys-His); it reads CNGAYRIGGKELQVH.

The protein belongs to the tyrosinase family. The cofactor is Cu(2+).

Its subcellular location is the plastid. It localises to the chloroplast thylakoid lumen. It catalyses the reaction 2 catechol + O2 = 2 1,2-benzoquinone + 2 H2O. Its function is as follows. Catalyzes the oxidation of mono- and o-diphenols to o-diquinones. This is Polyphenol oxidase D, chloroplastic from Solanum lycopersicum (Tomato).